Reading from the N-terminus, the 239-residue chain is Tetratricopeptide repeat protein 9B (239 aa).

The disordered stretch occupies residues 1-54 (MQRGALSPVLMLSAAPEPPPRPPPALSPPGPGSAPRHGSARSGPAPEPSGGLAA). Ser-7 and Ser-27 each carry phosphoserine. Positions 16–32 (PEPPPRPPPALSPPGPG) are enriched in pro residues. The TPR 1 repeat unit spans residues 63–97 (AVAFKAEGQRCYREKKFREAIGKYHRALLQLKAAQ). A disordered region spans residues 98-121 (GARPGGLPTPSPGPTTSPGPARLS). The segment covering 104 to 114 (LPTPSPGPTTS) has biased composition (pro residues). Residues 169 to 202 (FKATYRAGIAFYHLGDYARALRYLQEARSREPTD) form a TPR 2 repeat.

This sequence belongs to the TTC9 family.

This chain is Tetratricopeptide repeat protein 9B (Ttc9b), found in Mus musculus (Mouse).